The primary structure comprises 235 residues: Caveolin-1 (235 aa).

Residues 1–161 (MSTEQDIKTE…LVSLLALPFT (161 aa)) lie on the Cytoplasmic side of the membrane. The interval 29-72 (GEAVVAPEEPKPKKNWFTFGKKKAAPTDETNIEEGGAPGDEPVK) is disordered. Positions 162-182 (IIFAIFFGLLASINVFIIVPL) form an intramembrane region, helical. Residues 183 to 235 (GKLLSIPGTLLAKLWNWLIHAIFDPIASAVGLIFSNFNIRKYGINQETTAPCV) are Cytoplasmic-facing. Cys234 carries the S-palmitoyl cysteine lipid modification.

It belongs to the caveolin family. As to quaternary structure, homooligomer containing 14-16 monomers per oligomer.

Its subcellular location is the golgi apparatus membrane. The protein resides in the cell membrane. It localises to the membrane. The protein localises to the caveola. Its function is as follows. May act as a scaffolding protein within caveolar membranes. Interacts directly with G-protein alpha subunits and can functionally regulate their activity. This Caenorhabditis elegans protein is Caveolin-1 (cav-1).